Reading from the N-terminus, the 156-residue chain is SCP2 sterol-binding domain-containing protein 1 (156 aa).

In terms of domain architecture, SCP2 spans 44–156 (SFPVFQDIRL…ERVFKDWAKF (113 aa)).

The sequence is that of SCP2 sterol-binding domain-containing protein 1 (SCP2D1) from Homo sapiens (Human).